Consider the following 557-residue polypeptide: Leucine-rich glioma-inactivated protein 1 (557 aa).

A signal peptide spans 1–34 (MESESSRRMGNACIPLKRIAYFLCLFSVVLLTEG). In terms of domain architecture, LRRNT spans 35–72 (KKPAKPKCPAVCTCSKDNALCENARSIPRTVPPDVISL). LRR repeat units follow at residues 92-113 (SLQL…AFIG), 116-137 (HLEY…TFRG), and 140-161 (SLIH…IFKG). The region spanning 173 to 223 (NAFNCDCKLKWLVEWLGHTNATVEDIYCEGPPEYKKRKINSLSPKDFDCII) is the LRRCT domain. Asparagine 192 carries N-linked (GlcNAc...) asparagine glycosylation. EAR repeat units follow at residues 225–267 (EFAK…EWDH), 271–313 (TFRN…KRDG), 317–364 (KFIK…KWNG), 366–415 (GFYS…QWSK), 419–462 (LFTN…KWGG), 464–506 (SFQD…NWDA), and 510–552 (KFVK…KHVI). Residue asparagine 277 is glycosylated (N-linked (GlcNAc...) asparagine). N-linked (GlcNAc...) asparagine glycosylation occurs at asparagine 422.

As to quaternary structure, oligomer. Interacts with KCNA1 within a complex containing KCNA1, KCNA4 and KCNAB1. Part of a complex containing ADAM22, DLG4/PSD95 and CACNG2 (stargazin). Can bind to ADAM11 and ADAM23. Post-translationally, glycosylated. In terms of tissue distribution, expressed in the brain (at protein level). Expressed in cerebellar cortex basket cell terminals (at protein level). Highly expressed in the dentate gyrus and CA3 field of the hippocampus.

It localises to the secreted. The protein resides in the synapse. The protein localises to the cytoplasm. Its subcellular location is the golgi apparatus. It is found in the endoplasmic reticulum. In terms of biological role, regulates voltage-gated potassium channels assembled from KCNA1, KCNA4 and KCNAB1. It slows down channel inactivation by precluding channel closure mediated by the KCNAB1 subunit. Ligand for ADAM22 that positively regulates synaptic transmission mediated by AMPA-type glutamate receptors. Plays a role in suppressing the production of MMP1/3 through the phosphatidylinositol 3-kinase/ERK pathway. This is Leucine-rich glioma-inactivated protein 1 from Mus musculus (Mouse).